The sequence spans 435 residues: MAGNFSEIESQGNISLKFGFLGLGMGGCAIAAECANKETQIKNNKYPYRAILVNTNSQDFNKIEIKNAGNVRKIQLEGYEQGAARNPQVGEEAFVKHETKIFETVKQEFEDRDFIWITCGLGGGTGTGALLKAIEMLYEHDYNFGLLLTLPRDAEALKVLENATSRIRSIAMNQEAFGSIVLIDNAKLYRKFEEENPSALANEYTSYSNKYIADALHEINLVTSSFTPFSDTHFDASEFAQVINTPGVLSLAKLELKSNQLDTENPLGYLTQLGNALEKGVLYDTEREELESAKKSALSIVTSPLRASRLYNFSFLNQMENFLKDRTPYVDERPIAPYVNKHTAKKEEDIVKFYSVVAGLPLPKRVSDIIDEITRIKEEREQANSKKSNAVLNKLFAFDDSVQEEKPKKKKLNFGAEPEAEVADDSQPTKKKLSF.

Residues 25–26 (MG), 124–126 (GTG), Asn-185, and Asn-209 each bind GTP. The interval 403-435 (QEEKPKKKKLNFGAEPEAEVADDSQPTKKKLSF) is disordered.

Belongs to the FtsZ family. TubZ subfamily. As to quaternary structure, polymerizes to form two-stranded filaments and bundles at higher concentration in the presence of GTP. Binds to the TubR-tubC protein DNA complex.

Its subcellular location is the cytoplasm. It carries out the reaction GTP + H2O = GDP + phosphate + H(+). With respect to regulation, GTPase inhibited by GTP-gamma-S, which also stabilizes filaments. In terms of biological role, a tubulin-like, filament forming GTPase; the motor component of the type III plasmid partition system which ensures correct segregation of the pXO1 plasmid. Essential for plasmid replication. The filaments seed from a DNA centromere-like site (tubC)-TubR complex which extends to surround the TubZ filaments. Highly dynamic filaments grow at the plus end and depolymerize at the minus end, a process called treadmilling. TubR-tubC complexes track the depolymerizing minus end of the filament, probably pulling plasmid within the cell. Has a high GTPase activity; in the presence of GTP assembles into dynamic filaments which bind almost exclusively GDP. Filament formation is cooperative, requiring a critical concentration. Formation occurs very quickly and is followed by disassembly as GTP is consumed. Small amounts of GTP-gamma-S stabilize filaments. Has high GTP and dGTPase activity, 6-fold lower ATPase activity. Forms filaments in the presence of ATP that also disassemble. Weakly binds DNA in a GTP-dependent, non-sequence-specific manner; GTP hydrolysis is not required for DNA-binding. In Bacillus anthracis, this protein is Tubulin-like protein TubZ.